We begin with the raw amino-acid sequence, 223 residues long: MNLQNNQGKFSKEQFSKERFCQLEDEQVIEMVHVGDSDALDYLITKYRNFVRAKARSYFLIGADREDIVQEGMIGLYKSIRDFREDKLTSFKAFAELCITRQIITAIKTATRQKHIPLNSYVSLDKPIYDEESDRTLLDVISGAKVMNPEELIINQEEFDDIELKMGELLSDLERKVLALYLDGRSYQEISEELNRHVKSIDNALQRVKRKLEKYLELREISL.

Residues 67-80 (DIVQEGMIGLYKSI) carry the Polymerase core binding motif. Residues 187–206 (YQEISEELNRHVKSIDNALQ) constitute a DNA-binding region (H-T-H motif).

Belongs to the sigma-70 factor family.

Its function is as follows. Sigma factors are initiation factors that promote the attachment of RNA polymerase to specific initiation sites and are then released. This sigma factor is involved in the transition to post-exponential phase in the beginning of sporulation. In Bacillus licheniformis, this protein is RNA polymerase sigma-H factor (sigH).